The following is an 835-amino-acid chain: Replication origin-binding protein (835 aa).

The region spanning P54–H215 is the Helicase ATP-binding domain. A67–T74 contributes to the ATP binding site.

The protein belongs to the herpesviridae OriBP family. Homodimer. Interacts with the major DNA-binding protein. Interacts with the helicase/primase component 52 and the polymerase accessory protein.

The protein resides in the host nucleus. Functionally, functions as a docking protein to recruit essential components of the viral replication machinery to viral DNA origins. In the presence of the major DNA-binding protein, opens dsDNA leading to a conformational change in the origin that facilitates DNA unwinding and subsequent replication. This Varicella-zoster virus (strain Oka vaccine) (HHV-3) protein is Replication origin-binding protein.